Consider the following 126-residue polypeptide: FCS-Like Zinc finger 7 (126 aa).

The segment at 72 to 116 adopts an FLZ-type zinc-finger fold; that stretch reads SFLVNCGFCKRGLAPGRDIYMYKGDAAFCSIECREQQMEHDEGKT.

This sequence belongs to the FLZ family. Interacts with KIN10 and KIN11 via its FLZ-type zinc finger domain. Interacts with KINB3 via its N-terminal part. Forms homodimer and heterodimer with FLZ1, FLZ2 and FLZ15 in vitro.

It is found in the cytoplasm. Its subcellular location is the nucleus. Its function is as follows. May act as an adapter to facilitate the interaction of SnRK1 complex with effector proteins, conferring tissue- and stimulus-type specific differences in the SnRK1 regulation pathway. This Arabidopsis thaliana (Mouse-ear cress) protein is FCS-Like Zinc finger 7.